The following is a 671-amino-acid chain: Probable potassium transport system protein Kup (671 aa).

Positions 1-43 (MSQIPSPNDPASTGAAPSSAAVPAGPSATPAPSPTAGFSLPGH) are disordered. Residues 10 to 37 (PASTGAAPSSAAVPAGPSATPAPSPTAG) show a composition bias toward low complexity. The next 12 membrane-spanning stretches (helical) occupy residues 52-72 (LAAL…TSPL), 92-112 (VLGV…FKYM), 147-167 (LMLG…TPAI), 181-201 (PAME…LFLF), 209-229 (VGAV…VLGV), 255-275 (GWHG…GEAL), 291-311 (WLGL…ALLL), 323-343 (LLAP…AAIV), 381-401 (IYLP…VLGF), 407-427 (LASA…LLFH), 441-461 (AWPL…ANVV), and 465-485 (DGGW…STWK).

This sequence belongs to the HAK/KUP transporter (TC 2.A.72) family.

It is found in the cell inner membrane. The catalysed reaction is K(+)(in) + H(+)(in) = K(+)(out) + H(+)(out). Functionally, transport of potassium into the cell. Likely operates as a K(+):H(+) symporter. The chain is Probable potassium transport system protein Kup from Anaeromyxobacter dehalogenans (strain 2CP-1 / ATCC BAA-258).